We begin with the raw amino-acid sequence, 100 residues long: Elevenin-Vc1 (100 aa).

An N-terminal signal peptide occupies residues 1–24 (MAPSQKALLVLVLSMLLTASDSWA). The cysteines at positions 29 and 38 are disulfide-linked. A propeptide spanning residues 44-100 (KRGGDSLSVGGSAELDDALTDPFLRSEEPREWRELTRLSRVLQTFLSHPTGETEQHD) is cleaved from the precursor.

This sequence belongs to the elevenin family. As to quaternary structure, monomer. Expressed by the venom duct.

It localises to the secreted. May mimic the function of prey elevenin neuropeptide. In vivo, intracranial injection in mice induces hyperactivity (tested at 5 and 10 nM). In Conus victoriae (Queen Victoria cone), this protein is Elevenin-Vc1.